The chain runs to 155 residues: 3-hydroxyacyl-[acyl-carrier-protein] dehydratase FabZ (155 aa).

H58 is an active-site residue.

The protein belongs to the thioester dehydratase family. FabZ subfamily.

It localises to the cytoplasm. The catalysed reaction is a (3R)-hydroxyacyl-[ACP] = a (2E)-enoyl-[ACP] + H2O. Its function is as follows. Involved in unsaturated fatty acids biosynthesis. Catalyzes the dehydration of short chain beta-hydroxyacyl-ACPs and long chain saturated and unsaturated beta-hydroxyacyl-ACPs. The protein is 3-hydroxyacyl-[acyl-carrier-protein] dehydratase FabZ of Rhizobium etli (strain CIAT 652).